Reading from the N-terminus, the 352-residue chain is Dysbindin (352 aa).

Position 11 is a phosphoserine (Ser-11). The stretch at 88 to 176 forms a coiled coil; that stretch reads EKKRTSLNEL…EAFKAELDTE (89 aa). The dysbindin stretch occupies residues 173–325; the sequence is LDTEHTQKAL…DEEEVQVDTA (153 aa). A Nuclear export signal motif is present at residues 243 to 256; that stretch reads LMDISDQEALDVFL. The disordered stretch occupies residues 267 to 352; that stretch reads SPGVEMESNP…SDQCDSTQDI (86 aa). Polar residues predominate over residues 274-285; it reads SNPNQNEMSLQI. Residues 286 to 301 are compositionally biased toward low complexity; that stretch reads PSPSESASQPPASPSA. Ser-315, Ser-340, and Ser-343 each carry phosphoserine.

This sequence belongs to the dysbindin family. Interacts with AP3M1 and TRIM32. Interacts (isoform 1 and isoform 2 only) with the DNA-dependent protein kinase complex DNA-PK; the interaction phosphorylates DTNBP1 in vitro. Interacts directly in this complex with XRCC5 and XRCC6. Interacts with XPO1; the interaction exports DTNBP1 out of the nucleus. Component of the biogenesis of lysosome-related organelles complex 1 (BLOC-1) composed of BLOC1S1, BLOC1S2, BLOC1S3, BLOC1S4, BLOC1S5, BLOC1S6, DTNBP1/BLOC1S7 and SNAPIN/BLOC1S8. The BLOC-1 complex associates with the AP-3 protein complex and membrane protein cargos. This BLOC-1 complex also associates with the BLOC-2 complex in endosomes. Binds to DTNA and DTNB but may not be a physiological binding partner. Interacts (via its coiled coil domain) with KXD1. Interacts with AP3B2, BLOC1S5, BLOC1S6, CMYA5, PI4K2, RNF151 and SNAPIN/BLOC1S8. Interacts with XPO1; the interaction exports DTNBP1 out of the nucleus. Post-translationally, ubiquitinated by TRIM32. Ubiquitination leads to DTNBP1 degradation. As to expression, detected in brain, in hippocampus and dentate gyrus neurons. Detected at axon bundles and axon terminals, notably in the cerebellum and hippocampus. Detected in neuropil in hippocampus, lateral septum, basal ganglia and substantia nigra. Highly expressed in pyramidal cells of hippocampus CA2 and CA3. Detected at the heart and skeletal muscle sarcolemma (at protein level). Ubiquitously expressed. The highest expression is observed in testis, liver, kidney, brain, heart and lung. Expressed at lower levels in stomach and small intestine.

The protein localises to the cytoplasm. Its subcellular location is the cytoplasmic vesicle membrane. It is found in the endosome membrane. The protein resides in the melanosome membrane. It localises to the postsynaptic density. The protein localises to the endoplasmic reticulum. Its subcellular location is the nucleus. It is found in the cytoplasmic vesicle. The protein resides in the secretory vesicle. It localises to the synaptic vesicle membrane. The protein localises to the postsynaptic cell membrane. Component of the BLOC-1 complex, a complex that is required for normal biogenesis of lysosome-related organelles (LRO), such as platelet dense granules and melanosomes. In concert with the AP-3 complex, the BLOC-1 complex is required to target membrane protein cargos into vesicles assembled at cell bodies for delivery into neurites and nerve terminals. The BLOC-1 complex, in association with SNARE proteins, is also proposed to be involved in neurite extension. Associates with the BLOC-2 complex to facilitate the transport of TYRP1 independent of AP-3 function. Plays a role in synaptic vesicle trafficking and in neurotransmitter release. Plays a role in the regulation of cell surface exposure of DRD2. May play a role in actin cytoskeleton reorganization and neurite outgrowth. May modulate MAPK8 phosphorylation. Appears to promote neuronal transmission and viability through regulating the expression of SNAP25 and SYN1, modulating PI3-kinase-Akt signaling and influencing glutamatergic release. Regulates the expression of SYN1 through binding to its promoter. Modulates prefrontal cortical activity via the dopamine/D2 pathway. The protein is Dysbindin (Dtnbp1) of Mus musculus (Mouse).